Reading from the N-terminus, the 283-residue chain is MPELPEVETVCRGLNQLTFGQTIRGGKVLLPRTLAYPVSIEEFLEQINNATFGQWQRRGKYLLVPLEEKKGWLGVHLRMTGQLLWVKQNEPLSRHTRLRLFCDRSKELRFVDIRTFGKVWWVPPNQPPETIITGLQKLGLEPFSNAFSLDYFIDKLKGRQRNIKTILLDQSVVAGIGNIYADEALFKSGIRPTTLGKELSQPQVKRLREAMIEVLKTAIEEGGTTFSDFRGVTGINGNYSGVAWVYGRHNQPCRVCGTPIERIKLGGRSSHFCPQCQPLGNKK.

Pro2 functions as the Schiff-base intermediate with DNA in the catalytic mechanism. Residue Glu3 is the Proton donor of the active site. The Proton donor; for beta-elimination activity role is filled by Lys60. Residues His95, Arg114, and Arg159 each coordinate DNA. The FPG-type zinc-finger motif lies at 244–278; it reads WVYGRHNQPCRVCGTPIERIKLGGRSSHFCPQCQP. The active-site Proton donor; for delta-elimination activity is the Arg268.

It belongs to the FPG family. In terms of assembly, monomer. Zn(2+) serves as cofactor.

It carries out the reaction Hydrolysis of DNA containing ring-opened 7-methylguanine residues, releasing 2,6-diamino-4-hydroxy-5-(N-methyl)formamidopyrimidine.. It catalyses the reaction 2'-deoxyribonucleotide-(2'-deoxyribose 5'-phosphate)-2'-deoxyribonucleotide-DNA = a 3'-end 2'-deoxyribonucleotide-(2,3-dehydro-2,3-deoxyribose 5'-phosphate)-DNA + a 5'-end 5'-phospho-2'-deoxyribonucleoside-DNA + H(+). In terms of biological role, involved in base excision repair of DNA damaged by oxidation or by mutagenic agents. Acts as a DNA glycosylase that recognizes and removes damaged bases. Has a preference for oxidized purines, such as 7,8-dihydro-8-oxoguanine (8-oxoG). Has AP (apurinic/apyrimidinic) lyase activity and introduces nicks in the DNA strand. Cleaves the DNA backbone by beta-delta elimination to generate a single-strand break at the site of the removed base with both 3'- and 5'-phosphates. This is Formamidopyrimidine-DNA glycosylase from Crocosphaera subtropica (strain ATCC 51142 / BH68) (Cyanothece sp. (strain ATCC 51142)).